The following is a 310-amino-acid chain: Dehydrodolichyl diphosphate synthase 2 (310 aa).

Belongs to the UPP synthase family. The cofactor is Mg(2+).

The protein operates within protein modification; protein glycosylation. Its function is as follows. Catalyzes cis-prenyl chain elongation to produce the polyprenyl backbone of dolichol, a glycosyl carrier-lipid required for the biosynthesis of several classes of glycoprotein. This chain is Dehydrodolichyl diphosphate synthase 2, found in Arabidopsis thaliana (Mouse-ear cress).